A 242-amino-acid polypeptide reads, in one-letter code: Pyridoxine 5'-phosphate synthase (242 aa).

N8 provides a ligand contact to 3-amino-2-oxopropyl phosphate. Residue 10–11 (DH) coordinates 1-deoxy-D-xylulose 5-phosphate. Position 19 (R19) interacts with 3-amino-2-oxopropyl phosphate. The active-site Proton acceptor is H44. Residues R46 and H51 each contribute to the 1-deoxy-D-xylulose 5-phosphate site. Catalysis depends on E71, which acts as the Proton acceptor. T101 lines the 1-deoxy-D-xylulose 5-phosphate pocket. H193 (proton donor) is an active-site residue. 3-amino-2-oxopropyl phosphate contacts are provided by residues G194 and 215–216 (GF).

This sequence belongs to the PNP synthase family. As to quaternary structure, homooctamer; tetramer of dimers.

It localises to the cytoplasm. It carries out the reaction 3-amino-2-oxopropyl phosphate + 1-deoxy-D-xylulose 5-phosphate = pyridoxine 5'-phosphate + phosphate + 2 H2O + H(+). The protein operates within cofactor biosynthesis; pyridoxine 5'-phosphate biosynthesis; pyridoxine 5'-phosphate from D-erythrose 4-phosphate: step 5/5. Functionally, catalyzes the complicated ring closure reaction between the two acyclic compounds 1-deoxy-D-xylulose-5-phosphate (DXP) and 3-amino-2-oxopropyl phosphate (1-amino-acetone-3-phosphate or AAP) to form pyridoxine 5'-phosphate (PNP) and inorganic phosphate. The polypeptide is Pyridoxine 5'-phosphate synthase (Elusimicrobium minutum (strain Pei191)).